We begin with the raw amino-acid sequence, 360 residues long: UPF0283 membrane protein Asuc_0957 (360 aa).

Helical transmembrane passes span 74–94, 102–122, and 215–235; these read VIAV…QWLI, WIYF…LSAL, and AVEN…MLFL.

This sequence belongs to the UPF0283 family.

It is found in the cell inner membrane. The chain is UPF0283 membrane protein Asuc_0957 from Actinobacillus succinogenes (strain ATCC 55618 / DSM 22257 / CCUG 43843 / 130Z).